A 308-amino-acid chain; its full sequence is tRNA pseudouridine synthase B (308 aa).

D47 (nucleophile) is an active-site residue.

It belongs to the pseudouridine synthase TruB family. Type 1 subfamily.

It catalyses the reaction uridine(55) in tRNA = pseudouridine(55) in tRNA. Functionally, responsible for synthesis of pseudouridine from uracil-55 in the psi GC loop of transfer RNAs. This is tRNA pseudouridine synthase B from Xanthomonas campestris pv. campestris (strain 8004).